A 231-amino-acid polypeptide reads, in one-letter code: Phycobilisome rod-core linker polypeptide cpcG (231 aa).

A PBS-linker domain is found at serine 11 to lysine 191.

Belongs to the phycobilisome linker protein family. The phycobilisome is a hemidiscoidal structure that is composed of two distinct substructures: a core complex and a number of rods radiating from the core.

Its subcellular location is the plastid. The protein localises to the chloroplast. It is found in the chloroplast thylakoid membrane. Functionally, rod-core linker protein required for attachment of phycocyanin to allophycocyanin in cores of phycobilisomes. Linker polypeptides determine the state of aggregation and the location of the disk-shaped phycobiliprotein units within the phycobilisome and modulate their spectroscopic properties in order to mediate a directed and optimal energy transfer. The chain is Phycobilisome rod-core linker polypeptide cpcG (cpcG) from Porphyra purpurea (Red seaweed).